The chain runs to 404 residues: Cysteine desulfurase IscS (404 aa).

Pyridoxal 5'-phosphate is bound by residues 75 to 76, Asn155, Gln183, and 203 to 205; these read AT and SGH. N6-(pyridoxal phosphate)lysine is present on Lys206. Position 243 (Thr243) interacts with pyridoxal 5'-phosphate. Residue Cys328 is the Cysteine persulfide intermediate of the active site. Position 328 (Cys328) interacts with [2Fe-2S] cluster.

Belongs to the class-V pyridoxal-phosphate-dependent aminotransferase family. NifS/IscS subfamily. In terms of assembly, homodimer. Forms a heterotetramer with IscU, interacts with other sulfur acceptors. The cofactor is pyridoxal 5'-phosphate.

It is found in the cytoplasm. It carries out the reaction (sulfur carrier)-H + L-cysteine = (sulfur carrier)-SH + L-alanine. Its pathway is cofactor biosynthesis; iron-sulfur cluster biosynthesis. Functionally, master enzyme that delivers sulfur to a number of partners involved in Fe-S cluster assembly, tRNA modification or cofactor biosynthesis. Catalyzes the removal of elemental sulfur and selenium atoms from cysteine and selenocysteine to produce alanine. Functions as a sulfur delivery protein for Fe-S cluster synthesis onto IscU, an Fe-S scaffold assembly protein, as well as other S acceptor proteins. Also functions as a selenium delivery protein in the pathway for the biosynthesis of selenophosphate. The chain is Cysteine desulfurase IscS from Salmonella gallinarum (strain 287/91 / NCTC 13346).